The primary structure comprises 495 residues: Glucose-6-phosphate 1-dehydrogenase (495 aa).

An N-acetylserine modification is found at S1. NADP(+)-binding positions include 15–22 (GASGDLAR), R49, and K149. D-glucose 6-phosphate is bound by residues K149, 179–183 (HYLGK), E217, and D236. H241 (proton acceptor) is an active-site residue. R332 is an NADP(+) binding site. Residue K335 coordinates D-glucose 6-phosphate. K341, R345, and R367 together coordinate NADP(+). Q369 contacts D-glucose 6-phosphate. Residues 375–377 (YLK), 395–397 (DLT), and K463 contribute to the NADP(+) site.

The protein belongs to the glucose-6-phosphate dehydrogenase family.

It catalyses the reaction D-glucose 6-phosphate + NADP(+) = 6-phospho-D-glucono-1,5-lactone + NADPH + H(+). The protein operates within carbohydrate degradation; pentose phosphate pathway; D-ribulose 5-phosphate from D-glucose 6-phosphate (oxidative stage): step 1/3. Functionally, catalyzes the rate-limiting step of the oxidative pentose-phosphate pathway, which represents a route for the dissimilation of carbohydrates besides glycolysis. The main function of this enzyme is to provide reducing power (NADPH) and pentose phosphates for fatty acid and nucleic acid synthesis. This Cyberlindnera jadinii (Torula yeast) protein is Glucose-6-phosphate 1-dehydrogenase.